The sequence spans 513 residues: 2-isopropylmalate synthase (513 aa).

The 264-residue stretch at 5–268 (LIIFDTTLRD…EVGIDTTQIV (264 aa)) folds into the Pyruvate carboxyltransferase domain. Mn(2+)-binding residues include aspartate 14, histidine 202, histidine 204, and asparagine 239. The tract at residues 394-513 (RLLSLEQQSA…SKNERVAAQG (120 aa)) is regulatory domain.

It belongs to the alpha-IPM synthase/homocitrate synthase family. LeuA type 1 subfamily. As to quaternary structure, homodimer. It depends on Mn(2+) as a cofactor.

The protein resides in the cytoplasm. It carries out the reaction 3-methyl-2-oxobutanoate + acetyl-CoA + H2O = (2S)-2-isopropylmalate + CoA + H(+). The protein operates within amino-acid biosynthesis; L-leucine biosynthesis; L-leucine from 3-methyl-2-oxobutanoate: step 1/4. Functionally, catalyzes the condensation of the acetyl group of acetyl-CoA with 3-methyl-2-oxobutanoate (2-ketoisovalerate) to form 3-carboxy-3-hydroxy-4-methylpentanoate (2-isopropylmalate). The protein is 2-isopropylmalate synthase of Methylibium petroleiphilum (strain ATCC BAA-1232 / LMG 22953 / PM1).